Consider the following 745-residue polypeptide: 5-methyltetrahydropteroyltriglutamate--homocysteine methyltransferase (745 aa).

5-methyltetrahydropteroyltri-L-glutamate-binding positions include Arg17–Lys20 and Lys111. L-homocysteine-binding positions include Ile421 to Ser423 and Glu474. Residues Ile421 to Ser423 and Glu474 each bind L-methionine. 5-methyltetrahydropteroyltri-L-glutamate is bound by residues Arg505–Cys506 and Trp551. Asp589 contributes to the L-homocysteine binding site. Residue Asp589 coordinates L-methionine. Position 595 (Glu595) interacts with 5-methyltetrahydropteroyltri-L-glutamate. His631, Cys633, and Glu655 together coordinate Zn(2+). The active-site Proton donor is the His684. Position 716 (Cys716) interacts with Zn(2+).

The protein belongs to the vitamin-B12 independent methionine synthase family. The cofactor is Zn(2+).

The catalysed reaction is 5-methyltetrahydropteroyltri-L-glutamate + L-homocysteine = tetrahydropteroyltri-L-glutamate + L-methionine. Its pathway is amino-acid biosynthesis; L-methionine biosynthesis via de novo pathway; L-methionine from L-homocysteine (MetE route): step 1/1. Functionally, catalyzes the transfer of a methyl group from 5-methyltetrahydrofolate to homocysteine resulting in methionine formation. The chain is 5-methyltetrahydropteroyltriglutamate--homocysteine methyltransferase from Thermodesulfovibrio yellowstonii (strain ATCC 51303 / DSM 11347 / YP87).